Reading from the N-terminus, the 185-residue chain is Pyruvate/ketoisovalerate oxidoreductases common subunit gamma (185 aa).

Heterotetramer of one alpha, one beta, one delta and one gamma chain.

The enzyme catalyses 2 oxidized [2Fe-2S]-[ferredoxin] + pyruvate + CoA = 2 reduced [2Fe-2S]-[ferredoxin] + acetyl-CoA + CO2 + H(+). It catalyses the reaction 3-methyl-2-oxobutanoate + 2 oxidized [2Fe-2S]-[ferredoxin] + CoA = 2-methylpropanoyl-CoA + 2 reduced [2Fe-2S]-[ferredoxin] + CO2 + H(+). In Thermococcus litoralis (strain ATCC 51850 / DSM 5473 / JCM 8560 / NS-C), this protein is Pyruvate/ketoisovalerate oxidoreductases common subunit gamma (porG).